We begin with the raw amino-acid sequence, 289 residues long: dTDP-rhamnosyl transferase RfbG (289 aa).

It belongs to the glycosyltransferase 2 family.

It participates in bacterial outer membrane biogenesis; lipopolysaccharide biosynthesis. In Shigella flexneri, this protein is dTDP-rhamnosyl transferase RfbG (rfbG).